We begin with the raw amino-acid sequence, 156 residues long: MPRRRVVGQRKILPDPKFKSELLAKFINVIMQDGKKSTAEKIIYKALDTASEKKGEDHLVILEAALDNVRPSVEVKSRRVGGSTYQVPCEVRPVRRNALAMRWLVEAARKRGEKSMALRLAGEMLDASENKGTAVKKREDVHRMAEANKAFAHYRW.

It belongs to the universal ribosomal protein uS7 family. Part of the 30S ribosomal subunit. Contacts proteins S9 and S11.

In terms of biological role, one of the primary rRNA binding proteins, it binds directly to 16S rRNA where it nucleates assembly of the head domain of the 30S subunit. Is located at the subunit interface close to the decoding center, probably blocks exit of the E-site tRNA. In Shewanella halifaxensis (strain HAW-EB4), this protein is Small ribosomal subunit protein uS7.